The following is a 411-amino-acid chain: Probable G-protein coupled receptor AH9.1 (411 aa).

At 1–18 (MLLFLLRRIFDCRYKYKL) the chain is on the cytoplasmic side. Residues 19-39 (FVKALVLFLTIVYNAGLVHFF) form a helical membrane-spanning segment. Residues 40–55 (FRTTSLDDSPEMNHVD) lie on the Extracellular side of the membrane. The chain crosses the membrane as a helical span at residues 56–76 (YVAHVIVMPIVLSIGMINQCL). Topologically, residues 77–87 (NVCTLLHIRTS) are cytoplasmic. Residues 88-108 (IFLYLKASAIADILSIVAFIP) form a helical membrane-spanning segment. Over 109–131 (FLFRHAKLIDPSWELGMFYHAHL) the chain is Extracellular. The helical transmembrane segment at 132-152 (ELPLINALISASALNIVAMTV) threads the bilayer. Residues 153-176 (DRYVSVCHPIKFFQNNETKPSRRR) lie on the Cytoplasmic side of the membrane. Residues 177 to 197 (TMLIIVMIYFIALMIYFPSVF) traverse the membrane as a helical segment. Residues 198–229 (QKKLGVVTDALTNKTIYTIVRNEDVEALQVFK) lie on the Extracellular side of the membrane. N-linked (GlcNAc...) asparagine glycosylation is present at Asn210. A helical transmembrane segment spans residues 230-250 (FYLIVRECICRWGPVLLLVIL). The Cytoplasmic segment spans residues 251–299 (NMCVVRGLRKIDKRNWFWRQPSQNSRTETLAQRQLRSPRDDRSRISVLL). A helical transmembrane segment spans residues 300-320 (FVTSATFIICNIPASVISFFV). Topologically, residues 321–333 (RRVSGSLFWQIFR) are extracellular. The helical transmembrane segment at 334–354 (AIANLLQVTSYLYNFYLYALC) threads the bilayer. At 355 to 411 (SSEYRHAFLRLFGCRSSLSPTSTGDSPTVRVSVHGKRCHQAVVLLGNENHENPVDEV) the chain is on the cytoplasmic side.

The protein belongs to the G-protein coupled receptor 1 family.

Its subcellular location is the cell membrane. Its function is as follows. Not known. Putative receptor. This Caenorhabditis elegans protein is Probable G-protein coupled receptor AH9.1.